Consider the following 311-residue polypeptide: Serine hydrolase-like protein (311 aa).

One can recognise an AB hydrolase-1 domain in the interval 27-227 (PPVLCLHGWL…FVSKEMFVHS (201 aa)). Serine 102 is an active-site residue. Serine 210 carries the post-translational modification Phosphoserine.

It belongs to the AB hydrolase superfamily. In terms of tissue distribution, ubiquitous. High protein expression in skeletal and cardiac muscle.

The protein localises to the cytoplasm. It is found in the perinuclear region. The protein resides in the peroxisome. Probable serine hydrolase. May be related to cell muscle hypertrophy. The chain is Serine hydrolase-like protein (Serhl) from Mus musculus (Mouse).